Here is a 383-residue protein sequence, read N- to C-terminus: Oxysterol-binding protein-related protein 4B (383 aa).

This sequence belongs to the OSBP family. Expressed in stems and flowers.

In terms of biological role, may be involved in the transport of sterols. The polypeptide is Oxysterol-binding protein-related protein 4B (ORP4B) (Arabidopsis thaliana (Mouse-ear cress)).